The following is a 103-amino-acid chain: Putative septation protein SpoVG (103 aa).

Belongs to the SpoVG family.

Could be involved in septation. The sequence is that of Putative septation protein SpoVG from Exiguobacterium sibiricum (strain DSM 17290 / CCUG 55495 / CIP 109462 / JCM 13490 / 255-15).